Consider the following 477-residue polypeptide: MKTWLMGLYEFFQAYKTVWTEIWKIRHQLDTPDREKDENEFLPAHLELIETPVSKKPRLIAYLIMLFLFLALVISIVSHVEIVATATGKLAFSGRSKEIKPIENALVKEIFVEDGQFVEKDQLLLHLTALGADADQQKTKSSLSLTKLERYRYEILLEAVAADRLPLIELTKDEFKHATEEDKTRIRYLITEQFEAWQKQKYQKELALQRREAEKQTVLANIRKYEGSSRVENERLKDLKKLFNSKSTSKHDVLTQENRHIEAVNELAVYKSRLNEVESDLRQAKEEIHLITQLFRADILEKLKQNVEAEKQLSLELEKNEQRQIASVIRAPVSYVQQLKTHTVGGVVTTAETLMVIAPEDDVLEVTALIQNKDIGFIEVGQDAVIKVETFPYTRYGYLMGKVKNITLEAIEHPQLGLVFNSIISIDRKTLSGKDGKEIELGSGMSVTAEIKTGERSVISYLLSPLEESVSESLRER.

Topologically, residues 1–59 are cytoplasmic; the sequence is MKTWLMGLYEFFQAYKTVWTEIWKIRHQLDTPDREKDENEFLPAHLELIETPVSKKPRL. Residues 60–80 traverse the membrane as a helical segment; that stretch reads IAYLIMLFLFLALVISIVSHV. Residues 81–477 lie on the Periplasmic side of the membrane; sequence EIVATATGKL…ESVSESLRER (397 aa).

This sequence belongs to the membrane fusion protein (MFP) (TC 8.A.1) family.

It localises to the cell inner membrane. Involved in the transport of the toxin RTX-I as well as that of RTX-II. This chain is RTX-I toxin determinant D (apxID), found in Actinobacillus pleuropneumoniae (Haemophilus pleuropneumoniae).